The following is a 142-amino-acid chain: Glutamate-rich protein 2 (142 aa).

Disordered regions lie at residues 1–55 and 104–142; these read MSKN…HAPL and EKAQ…CEDG. Over residues 9–27 the composition is skewed to basic and acidic residues; that stretch reads EQEKNNEHCPEDINDKLSE. A compositionally biased stretch (acidic residues) spans 28 to 43; that stretch reads STDDDGEDTSDEDKEE. The span at 44-53 shows a compositional bias: basic and acidic residues; the sequence is DSNPNKDTHA. The span at 109 to 142 shows a compositional bias: acidic residues; the sequence is LEEDDDESEEDNSESEGESTEDPSEESSDECEDG.

This chain is Glutamate-rich protein 2 (ERICH2), found in Bos taurus (Bovine).